We begin with the raw amino-acid sequence, 653 residues long: Rab proteins geranylgeranyltransferase component A 1 (653 aa).

Positions 606 to 653 (PPPPNPEDIILDGDSLQPEASESSAIPEANSETFKESTNLGNLEESSE) are disordered. The segment covering 623 to 646 (PEASESSAIPEANSETFKESTNLG) has biased composition (polar residues).

It belongs to the Rab GDI family. Monomer. Heterotrimer composed of RABGGTA, RABGGTB and CHM; within this trimer, RABGGTA and RABGGTB form the catalytic component B, while CHM (component A) mediates Rab protein binding. Can associate with the Rab GGTase dimer (RGGT or component B) prior to Rab protein binding; the association is stabilized by geranylgeranyl pyrophosphate (GGpp). The CHM:RGGT:Rab complex is destabilized by GGpp. Interacts with RAB1A, RAB1B, RAB5A, RAB7A and RAB27A and mediates their prenylation. Interacts with the non-phosphorylated forms of RAB3A, RAB3B, RAB3C, RAB3D, RAB5B, RAB5C, RAB8A, RAB8B, RAB10, RAB12, RAB35, and RAB43.

The protein resides in the cytoplasm. It is found in the cytosol. In terms of biological role, substrate-binding subunit of the Rab geranylgeranyltransferase (GGTase) complex. Binds unprenylated Rab proteins and presents the substrate peptide to the catalytic component B composed of RABGGTA and RABGGTB, and remains bound to it after the geranylgeranyl transfer reaction. The component A is thought to be regenerated by transferring its prenylated Rab back to the donor membrane. Besides, a pre-formed complex consisting of CHM and the Rab GGTase dimer (RGGT or component B) can bind to and prenylate Rab proteins; this alternative pathway is proposed to be the predominant pathway for Rab protein geranylgeranylation. This Homo sapiens (Human) protein is Rab proteins geranylgeranyltransferase component A 1 (CHM).